A 367-amino-acid chain; its full sequence is HTH-type transcriptional regulator GbdR (367 aa).

The HTH araC/xylS-type domain maps to 227 to 325 (QEIVALMEAN…GIPPRDERQG (99 aa)). DNA-binding regions (H-T-H motif) lie at residues 244–265 (DELA…QKYL) and 292–315 (IIEV…REYF).

Functionally, specific regulator of choline metabolism, which activates transcription of at least 25 genes from 11 promoters in response to choline metabolites. Required for the induction of plcH, encoding the phospholipase C, and pchP, encoding the phosphorylcholine phosphatase, in response to glycine betaine (GB) and dimethylglycine (DMG). Also controls the expression of gbcAB and dgcAB, which are required for GB and DMG degradation, respectively, in response to both GB and DMG. The GbdR regulon also includes genes encoding sarcosine, glycine and serine catabolic enzymes, the BetX and CbcXWV quaternary amine transport proteins and the acetylcholine esterase gene, choE. Acts by binding directly to the promoter region of the genes. May play an important role during P.aeruginosa interactions with eukaryotes. In Pseudomonas aeruginosa (strain UCBPP-PA14), this protein is HTH-type transcriptional regulator GbdR.